Here is a 254-residue protein sequence, read N- to C-terminus: CRISPR-associated endoribonuclease Cas6 1 (254 aa).

Y32 serves as the catalytic Proton acceptor. H47 acts as the Proton donor in catalysis.

This sequence belongs to the CRISPR-associated protein Cas6/Cse3/CasE family.

In terms of biological role, CRISPR (clustered regularly interspaced short palindromic repeat) is an adaptive immune system that provides protection against mobile genetic elements (viruses, transposable elements and conjugative plasmids). CRISPR clusters contain sequences complementary to antecedent mobile elements and target invading nucleic acids. CRISPR clusters are transcribed and processed into CRISPR RNA (crRNA). This protein processes pre-crRNA into individual crRNA units. This Methanocaldococcus jannaschii (strain ATCC 43067 / DSM 2661 / JAL-1 / JCM 10045 / NBRC 100440) (Methanococcus jannaschii) protein is CRISPR-associated endoribonuclease Cas6 1 (cas6a).